The chain runs to 148 residues: ATP synthase epsilon chain (148 aa).

The protein belongs to the ATPase epsilon chain family. F-type ATPases have 2 components, CF(1) - the catalytic core - and CF(0) - the membrane proton channel. CF(1) has five subunits: alpha(3), beta(3), gamma(1), delta(1), epsilon(1). CF(0) has three main subunits: a, b and c.

It localises to the cell membrane. Produces ATP from ADP in the presence of a proton gradient across the membrane. This is ATP synthase epsilon chain from Streptococcus thermophilus (strain ATCC BAA-491 / LMD-9).